The chain runs to 578 residues: MELNAGGVIAYISSSSSASSPASCHSEGSENSFQSSSSSVPSSPNSSNCDANGNPKNTDVSSIDGVLKSDRTDCPVKTGKPGAPGMTKSHSGMTKFSGMVLLCKVCGDVASGFHYGVHACEGCKGFFRRSIQQNIQYKKCLKNENCSIMRMNRNRCQQCRFKKCLSVGMSRDAVRFGRIPKREKQRMLIEMQSAMKTMMSTQFGGHLQSDTLAEPHEQSVPPAQEQLRPKPQLEQENIKSTPPPSDFAKEEVIGMVTRAHKDTFLYNQEHRENSSESMPPHRGERIPRNVEQYNLNHDHRGGGLHSHFPCSESQQHLSGQYKGRNMMHYPNGHTVCISNGHCVNFSSAYPQRVCDRIPVGGCSQTESRNSYLCSTGGRMHLVCPMSKSPYVDPQKSGHEIWEEFSMSFTPAVKEVVEFAKRIPGFRDLSQHDQVNLLKAGTFEVLMVRFASLFDAKERTVTFLSGKKYSVDDLHSMGAGDLLSSMFEFSEKLNGLQLSDEEMSLFTAVVLVSADRSGIENVNSVEALQETLIRALRTLIMKNHPNEASIFTKLLLKLPDLRSLNNMHSEELLAFKVHP.

A required for phosphorylation by CSNK1E and cytoplasmic localization region spans residues 1–60 (MELNAGGVIAYISSSSSASSPASCHSEGSENSFQSSSSSVPSSPNSSNCDANGNPKNTDV). The modulating stretch occupies residues 1 to 99 (MELNAGGVIA…HSGMTKFSGM (99 aa)). The segment covering 13–47 (SSSSSASSPASCHSEGSENSFQSSSSSVPSSPNSS) has biased composition (low complexity). The disordered stretch occupies residues 13 to 89 (SSSSSASSPA…KPGAPGMTKS (77 aa)). Serine 46 carries the phosphoserine; by GSK3-beta modification. Over residues 48–61 (NCDANGNPKNTDVS) the composition is skewed to polar residues. Residues 100–176 (VLLCKVCGDV…VGMSRDAVRF (77 aa)) constitute a DNA-binding region (nuclear receptor). NR C4-type zinc fingers lie at residues 103–123 (CKVC…CEGC) and 140–164 (CLKN…FKKC). N6-acetyllysine; by KAT5 occurs at positions 162 and 163. The tract at residues 214–247 (EPHEQSVPPAQEQLRPKPQLEQENIKSTPPPSDF) is disordered. Over residues 227 to 237 (LRPKPQLEQEN) the composition is skewed to basic and acidic residues. Cystine bridges form between cysteine 336-cysteine 342 and cysteine 373-cysteine 383. The region spanning 368 to 578 (RNSYLCSTGG…EELLAFKVHP (211 aa)) is the NR LBD domain. Cysteine 383 and histidine 567 together coordinate heme. Positions 396-578 (SGHEIWEEFS…EELLAFKVHP (183 aa)) are interaction with ZNHIT1.

It belongs to the nuclear hormone receptor family. NR1 subfamily. As to quaternary structure, binds DNA as a monomer or a homodimer. Interacts with NCOA5 coactivator, leading to a strong increase of transcription of target genes. Interacts (via N-terminus) with KAT5. Interacts (via C-terminus) with HDAC1. Interacts with ZNHIT1. Interacts with SIAH2. Post-translationally, deacetylated by HDAC1. Acetylation and deacetylation regulate its transcriptional regulatory activity. Under more reducing intracellular redox conditions, Cys-383 is in its heme-bound state, which is optimal for recruitment of the NCOR1/HDAC3 corepressor complex and repression of target genes. When subjected to oxidative stress conditions, Cys-383 undergoes oxidation to form a disulfide bridge with Cys-373, also triggering a ligand switch that results in release of bound heme and derepression of target genes. In terms of processing, ubiquitinated by SIAH2; leading to its proteasomal degradation. Post-translationally, phosphorylated by CSNK1E; phosphorylation enhances its cytoplasmic localization.

The protein resides in the nucleus. Its subcellular location is the cytoplasm. Its activity is regulated as follows. The heme-bound form can bind gaseous signaling molecules such as CO and nitric oxide (NO) and NO can reverse its transcriptional repressor activity. In terms of biological role, transcriptional repressor which coordinates circadian rhythm and metabolic pathways in a heme-dependent manner. Integral component of the complex transcription machinery that governs circadian rhythmicity and forms a critical negative limb of the circadian clock by directly repressing the expression of core clock components BMAL1 and CLOCK. Also regulates genes involved in metabolic functions, including lipid metabolism and the inflammatory response. Acts as a receptor for heme which stimulates its interaction with the NCOR1/HDAC3 corepressor complex, enhancing transcriptional repression. Recognizes two classes of DNA response elements within the promoter of its target genes and can bind to DNA as either monomers or homodimers, depending on the nature of the response element. Binds as a monomer to a response element composed of the consensus half-site motif 5'-[A/G]GGTCA-3' preceded by an A/T-rich 5' sequence (RevRE), or as a homodimer to a direct repeat of the core motif spaced by two nuclegotides (RevDR-2). Acts as a potent competitive repressor of ROR alpha (RORA) function and also negatively regulates the expression of NR1D1. Regulates lipid and energy homeostasis in the skeletal muscle via repression of genes involved in lipid metabolism and myogenesis including: CD36, FABP3, FABP4, UCP3, SCD1 and MSTN. Regulates hepatic lipid metabolism via the repression of APOC3. Represses gene expression at a distance in macrophages by inhibiting the transcription of enhancer-derived RNAs (eRNAs). In addition to its activity as a repressor, can also act as a transcriptional activator. Acts as a transcriptional activator of the sterol regulatory element-binding protein 1 (SREBF1) and the inflammatory mediator interleukin-6 (IL6) in the skeletal muscle. Plays a role in the regulation of circadian sleep/wake cycle; essential for maintaining wakefulness during the dark phase or active period. Key regulator of skeletal muscle mitochondrial function; negatively regulates the skeletal muscle expression of core clock genes and genes involved in mitochondrial biogenesis, fatty acid beta-oxidation and lipid metabolism. May play a role in the circadian control of neutrophilic inflammation in the lung. The protein is Nuclear receptor subfamily 1 group D member 2 of Rattus norvegicus (Rat).